The sequence spans 413 residues: MSHFAIVAPPLYSHAVALHALALEMAQRGHRVTFLTGNVASLAEQETERVAFYPLPASVQQAQRNVQQQSNGNLLRLIAAMSSLTDVLCQQLPAILQRLAVDALIVDEMEPAGSLVAEALGLPFISIACALPVNREPGLPLPVMPFHYAEDKRALRRFQVSERIYDALMYPHGQTILRHAQRFGLPERRRLDECLSPLAQISQSVPALDFPRRALPNCFHYVGALRYQPPPQVERSPRSTPRIFASLGTLQGHRLRLFQKIARACASVGAEVTIAHCDGLTPAQADSLYACGATEVVSFVDQPRYVAEANLVITHGGLNTVLDALAAATPVLAVPLSFDQPAVAARLVYNGLGRRVSRFARQQTLADEIAQLLGDETLHQRLATARQQLNDAGGTPRAATLIEQAIAGSESVS.

The protein belongs to the UDP-glycosyltransferase family.

The catalysed reaction is all-trans-zeaxanthin + 2 UDP-alpha-D-glucose = zeaxanthin bis(beta-D-glucoside) + 2 UDP + 2 H(+). The protein operates within carotenoid biosynthesis; zeaxanthin diglucoside biosynthesis. Functionally, catalyzes the glycosylation reaction which converts zeaxanthin to zeaxanthin bis(beta-D-glucoside). The reaction proceeds in two steps with the monoglucoside as an intermediate. The protein is Zeaxanthin glucosyltransferase (crtX) of Pseudescherichia vulneris (Escherichia vulneris).